A 282-amino-acid polypeptide reads, in one-letter code: Aquaporin PIP-type (282 aa).

The next 2 membrane-spanning stretches (helical) occupy residues 39-61 (WRAA…ATVI) and 74-96 (GLLG…TAGI). An NPA 1 motif is present at residues 102–104 (NPA). 4 helical membrane passes run 116-138 (SLLR…VGLV), 159-181 (GYNK…YTVF), 201-223 (LPIG…TGIN), and 243-265 (HWIF…QYVL). The NPA 2 motif lies at 223-225 (NPA).

The protein belongs to the MIP/aquaporin (TC 1.A.8) family. PIP (TC 1.A.8.11) subfamily.

It is found in the membrane. Functionally, water-specific channel. This chain is Aquaporin PIP-type, found in Atriplex canescens (Fourwing saltbush).